The following is a 2082-amino-acid chain: Probable ATP-dependent helicase PF08_0048 (2082 aa).

An HSA domain is found at 66 to 138; it reads KIVEPAKTPE…EEKRLKLYSK (73 aa). A compositionally biased stretch (low complexity) spans 209–221; it reads NNSEIVNNNASSV. Disordered stretches follow at residues 209–234 and 301–470; these read NNSEIVNNNASSVDNGDKELKEDDLT and NVIE…SPTR. Basic and acidic residues-rich tracts occupy residues 419 to 448 and 455 to 465; these read NSDHQSDQEQFNHETKDDIIKNSSYEHIDN and TGEDYKSDKEN. Positions 476–531 form a coiled coil; it reads KKEKYDEYDTKLKIEKREEENKNYEKDEHEYESDNYDKEKINKKKELILLKNDIEN. Residues 532–641 form a disordered region; it reads DSDETSEHIK…KNDSDDNDDI (110 aa). Positions 536-545 are enriched in basic and acidic residues; sequence TSEHIKRDSR. Residues 579 to 598 are compositionally biased toward low complexity; it reads DNNNSENDNNNDNNNDNNND. A compositionally biased stretch (acidic residues) spans 599–627; that stretch reads NNDDNNDDNNDDNNDDNNDDNNDDNNDDN. One can recognise a Helicase ATP-binding domain in the interval 674 to 839; the sequence is LYLYKNNING…WSLLHFLMPN (166 aa). Residue 687–694 participates in ATP binding; that stretch reads DEMGLGKT. The short motif at 790–793 is the DEAH box element; the sequence is DEAH. Residues 1199 to 1255 form a disordered region; sequence EQNNNNSKDNNNNIDNNNNIDNNNNIDNNNNIDNNNNIDNNNNNIDNNNNIDNHHNN. The region spanning 1772 to 1922 is the Helicase C-terminal domain; sequence ALEKLLSKCK…NICINMGNFN (151 aa). A coiled-coil region spans residues 1972-2060; sequence EQVENKDKMN…DEMRMKIEIE (89 aa).

It belongs to the SNF2/RAD54 helicase family. SWR1 subfamily. Component of a chromatin-remodeling complex.

It is found in the nucleus. In terms of biological role, catalytic component of a chromatin remodeling complex. This is Probable ATP-dependent helicase PF08_0048 from Plasmodium falciparum (isolate 3D7).